A 150-amino-acid polypeptide reads, in one-letter code: Cyanate hydratase (150 aa).

Active-site residues include Arg91, Glu94, and Ser117.

This sequence belongs to the cyanase family.

It carries out the reaction cyanate + hydrogencarbonate + 3 H(+) = NH4(+) + 2 CO2. Its function is as follows. Catalyzes the reaction of cyanate with bicarbonate to produce ammonia and carbon dioxide. The sequence is that of Cyanate hydratase from Synechococcus sp. (strain CC9311).